Consider the following 493-residue polypeptide: Glutamyl-tRNA(Gln) amidotransferase subunit A (493 aa).

Active-site charge relay system residues include Lys-78 and Ser-158. The active-site Acyl-ester intermediate is Ser-182.

It belongs to the amidase family. GatA subfamily. Heterotrimer of A, B and C subunits.

The enzyme catalyses L-glutamyl-tRNA(Gln) + L-glutamine + ATP + H2O = L-glutaminyl-tRNA(Gln) + L-glutamate + ADP + phosphate + H(+). Allows the formation of correctly charged Gln-tRNA(Gln) through the transamidation of misacylated Glu-tRNA(Gln) in organisms which lack glutaminyl-tRNA synthetase. The reaction takes place in the presence of glutamine and ATP through an activated gamma-phospho-Glu-tRNA(Gln). In Rickettsia felis (strain ATCC VR-1525 / URRWXCal2) (Rickettsia azadi), this protein is Glutamyl-tRNA(Gln) amidotransferase subunit A.